Reading from the N-terminus, the 175-residue chain is Gamma-crystallin M1 (175 aa).

4 Beta/gamma crystallin 'Greek key' domains span residues 2–40, 41–86, 89–121, and 130–172; these read GKII…RVES, GCFM…RYPY, FRMR…RMSD, and GHWL…RRIT.

It belongs to the beta/gamma-crystallin family. As to quaternary structure, monomer.

Crystallins are the dominant structural components of the vertebrate eye lens. The chain is Gamma-crystallin M1 (GM1) from Chiloscyllium indicum (Slender bamboo shark).